The sequence spans 209 residues: Pyridoxine/pyridoxamine 5'-phosphate oxidase (209 aa).

Substrate contacts are provided by residues 2-5 and Lys-66; that span reads RVEY. FMN-binding positions include 61–66, 76–77, Lys-83, and Gln-105; these read RTVLCK and FT. Substrate-binding residues include Tyr-123, Arg-127, and Ser-131. FMN-binding positions include 140 to 141 and Trp-186; that span reads QS. Substrate is bound at residue 192-194; it reads RVH. Arg-196 is an FMN binding site.

Belongs to the pyridoxamine 5'-phosphate oxidase family. Homodimer. Requires FMN as cofactor.

It catalyses the reaction pyridoxamine 5'-phosphate + O2 + H2O = pyridoxal 5'-phosphate + H2O2 + NH4(+). The catalysed reaction is pyridoxine 5'-phosphate + O2 = pyridoxal 5'-phosphate + H2O2. The protein operates within cofactor metabolism; pyridoxal 5'-phosphate salvage; pyridoxal 5'-phosphate from pyridoxamine 5'-phosphate: step 1/1. It participates in cofactor metabolism; pyridoxal 5'-phosphate salvage; pyridoxal 5'-phosphate from pyridoxine 5'-phosphate: step 1/1. In terms of biological role, catalyzes the oxidation of either pyridoxine 5'-phosphate (PNP) or pyridoxamine 5'-phosphate (PMP) into pyridoxal 5'-phosphate (PLP). The sequence is that of Pyridoxine/pyridoxamine 5'-phosphate oxidase from Mycobacterium sp. (strain JLS).